The primary structure comprises 526 residues: Probable fucosyltransferase 7 (526 aa).

The Cytoplasmic segment spans residues 1-4 (MKTK). The helical; Signal-anchor for type II membrane protein transmembrane segment at 5-25 (LMITIFSCLLLWSMLLLLSFS) threads the bilayer. Residues 26 to 526 (NIFKHQLLGA…KLVDDTKNEL (501 aa)) are Lumenal-facing. Residues N211, N215, and N363 are each glycosylated (N-linked (GlcNAc...) asparagine).

The protein belongs to the glycosyltransferase 37 family. As to expression, expressed in roots, leaves, stems and seedlings.

Its subcellular location is the golgi apparatus. The protein localises to the golgi stack membrane. The protein operates within protein modification; protein glycosylation. May be involved in cell wall biosynthesis. May act as a fucosyltransferase. The sequence is that of Probable fucosyltransferase 7 (FUT7) from Arabidopsis thaliana (Mouse-ear cress).